The chain runs to 455 residues: Homogentisate 1,2-dioxygenase (455 aa).

Catalysis depends on His-308, which acts as the Proton acceptor. Fe cation is bound by residues His-351 and Glu-357. Residues Tyr-366 and His-387 each coordinate homogentisate. Position 387 (His-387) interacts with Fe cation.

The protein belongs to the homogentisate dioxygenase family. Hexamer; dimer of trimers. Fe cation serves as cofactor.

The enzyme catalyses homogentisate + O2 = 4-maleylacetoacetate + H(+). It participates in amino-acid degradation; L-phenylalanine degradation; acetoacetate and fumarate from L-phenylalanine: step 4/6. Functionally, involved in the catabolism of homogentisate (2,5-dihydroxyphenylacetate or 2,5-OH-PhAc), a central intermediate in the degradation of phenylalanine and tyrosine. Catalyzes the oxidative ring cleavage of the aromatic ring of homogentisate to yield maleylacetoacetate. The protein is Homogentisate 1,2-dioxygenase of Xanthomonas campestris pv. campestris (strain 8004).